The chain runs to 268 residues: tRNA pseudouridine synthase A (268 aa).

The active-site Nucleophile is Asp52. Tyr113 contributes to the substrate binding site.

This sequence belongs to the tRNA pseudouridine synthase TruA family. As to quaternary structure, homodimer.

The catalysed reaction is uridine(38/39/40) in tRNA = pseudouridine(38/39/40) in tRNA. Formation of pseudouridine at positions 38, 39 and 40 in the anticodon stem and loop of transfer RNAs. The sequence is that of tRNA pseudouridine synthase A from Chlamydia abortus (strain DSM 27085 / S26/3) (Chlamydophila abortus).